Here is a 272-residue protein sequence, read N- to C-terminus: Rhomboid-type serine protease B (272 aa).

The next 5 membrane-spanning stretches (helical) occupy residues I30–V50, P72–L92, T103–V123, A133–F153, and T164–P184. Catalysis depends on S138, which acts as the Nucleophile. N-linked (GlcNAc...) asparagine glycosylation occurs at N185. Residues T186–L206 traverse the membrane as a helical segment. The active site involves H191.

It belongs to the peptidase S54 family.

Its subcellular location is the membrane. The catalysed reaction is Cleaves type-1 transmembrane domains using a catalytic dyad composed of serine and histidine that are contributed by different transmembrane domains.. Rhomboid protease that catalyzes intramembrane proteolysis. Required for transcription factor srbA activation by mediating its release from the membrane and thereby regulating its activity under hypoxic conditions. Essential for iron homeostasis and resistance to azoles such as voriconazole. Required for virulence in murine models of invasive pulmonary aspergillosis (IPA). This chain is Rhomboid-type serine protease B, found in Aspergillus fumigatus (strain CBS 144.89 / FGSC A1163 / CEA10) (Neosartorya fumigata).